The primary structure comprises 363 residues: MSDTSPNYHTLQSIGWPWPGPPEDPAWQAIFAAHPQALPARVVEQHRTGYVVADTPEASLKAESLPEWQRPRFPSHERAAVGDWVLMEGKRIVALLPRRTSIKRGAAGEHYHQQVIAANIDTVFIVCGLDADFNPRRIERYLLLVGGGGAEPVVVLTKADQTEYAEDALAVLEELEAQNIALRAVNAKDPESVAALRPWLGDGRTAVLVGSSGAGKSTLTNTLLGTQKMKTNAVRENDSRGRHTTTHRALIPLPSGACLIDTPGMRELKPTGEEDLAEGGFSDVEALAAQCRFNDCAHIAEPGCAVRAAIEADQLDPERVANYMKLRVEVASAAEKLATRVAQNNRGKGSGKRPASVDRPGRR.

Positions 112-268 (HQQVIAANID…LIDTPGMREL (157 aa)) constitute a CP-type G domain. GTP contacts are provided by residues 157–160 (TKAD) and 210–218 (GSSGAGKST). 4 residues coordinate Zn(2+): Cys-291, Cys-296, His-298, and Cys-304. The disordered stretch occupies residues 340–363 (RVAQNNRGKGSGKRPASVDRPGRR).

Belongs to the TRAFAC class YlqF/YawG GTPase family. RsgA subfamily. Monomer. Associates with 30S ribosomal subunit, binds 16S rRNA. Zn(2+) serves as cofactor.

Its subcellular location is the cytoplasm. Functionally, one of several proteins that assist in the late maturation steps of the functional core of the 30S ribosomal subunit. Helps release RbfA from mature subunits. May play a role in the assembly of ribosomal proteins into the subunit. Circularly permuted GTPase that catalyzes slow GTP hydrolysis, GTPase activity is stimulated by the 30S ribosomal subunit. This chain is Small ribosomal subunit biogenesis GTPase RsgA, found in Xanthomonas campestris pv. campestris (strain 8004).